The chain runs to 286 residues: 4-diphosphocytidyl-2-C-methyl-D-erythritol kinase (286 aa).

Residue K11 is part of the active site. 94–104 serves as a coordination point for ATP; it reads PMGGGIGGGSS. Residue D136 is part of the active site.

This sequence belongs to the GHMP kinase family. IspE subfamily.

The catalysed reaction is 4-CDP-2-C-methyl-D-erythritol + ATP = 4-CDP-2-C-methyl-D-erythritol 2-phosphate + ADP + H(+). It functions in the pathway isoprenoid biosynthesis; isopentenyl diphosphate biosynthesis via DXP pathway; isopentenyl diphosphate from 1-deoxy-D-xylulose 5-phosphate: step 3/6. Functionally, catalyzes the phosphorylation of the position 2 hydroxy group of 4-diphosphocytidyl-2C-methyl-D-erythritol. The polypeptide is 4-diphosphocytidyl-2-C-methyl-D-erythritol kinase (Pseudomonas putida (strain GB-1)).